The following is a 257-amino-acid chain: Small ribosomal subunit protein uS2 (257 aa).

This sequence belongs to the universal ribosomal protein uS2 family.

This is Small ribosomal subunit protein uS2 from Bartonella quintana (strain Toulouse) (Rochalimaea quintana).